Here is a 244-residue protein sequence, read N- to C-terminus: Probable Ni/Fe-hydrogenase B-type cytochrome subunit (244 aa).

Transmembrane regions (helical) follow at residues 39–59, 73–93, 150–171, and 204–221; these read LWHW…FFIG, FLMG…AIGM, FAMF…FAMY, and LGMW…YAAI.

The protein belongs to the HupC/HyaC/HydC family.

Its subcellular location is the cell membrane. Functionally, probable b-type cytochrome. The protein is Probable Ni/Fe-hydrogenase B-type cytochrome subunit (hoxZ) of Cupriavidus necator (strain ATCC 17699 / DSM 428 / KCTC 22496 / NCIMB 10442 / H16 / Stanier 337) (Ralstonia eutropha).